An 81-amino-acid polypeptide reads, in one-letter code: Large ribosomal subunit protein bL28 (81 aa).

The protein belongs to the bacterial ribosomal protein bL28 family. Part of the 50S ribosomal subunit.

The protein is Large ribosomal subunit protein bL28 of Deinococcus radiodurans (strain ATCC 13939 / DSM 20539 / JCM 16871 / CCUG 27074 / LMG 4051 / NBRC 15346 / NCIMB 9279 / VKM B-1422 / R1).